Here is a 262-residue protein sequence, read N- to C-terminus: Ninja-family protein 2 (262 aa).

Positions 49–70 (RNSLACNTSKEAAGQSPKEMNA) are disordered.

It belongs to the Ninja family.

It is found in the nucleus. In Zea mays (Maize), this protein is Ninja-family protein 2.